Consider the following 215-residue polypeptide: MKTVLLTGFDPFGGESINPAWEVAKSLHEKTIGEYKIISKQVPTVFHKSISVLKEYIEELAPEFIICMGQAGGRPDITIERVAINIDDARIADNEGNQPVDVPVVEEGPAAYWSTLPMKAIVKKLQEEGIPASVSQTAGTFVCNHLFYGLMHELEKHDTKMKGGFIHIPFLPEQASNYPGQPSMSLSTIRKGIGLAVEVTMTVEVDIVEVGGTTH.

Catalysis depends on residues Glu-80, Cys-143, and His-167.

This sequence belongs to the peptidase C15 family. Homotetramer.

The protein resides in the cytoplasm. It carries out the reaction Release of an N-terminal pyroglutamyl group from a polypeptide, the second amino acid generally not being Pro.. In terms of biological role, removes 5-oxoproline from various penultimate amino acid residues except L-proline. This is Pyrrolidone-carboxylate peptidase from Bacillus thuringiensis subsp. konkukian (strain 97-27).